The sequence spans 396 residues: L-lactate dehydrogenase (396 aa).

In terms of domain architecture, FMN hydroxy acid dehydrogenase spans 1–380; sequence MIISAASDYR…SGDSLVQELG (380 aa). Y24 lines the substrate pocket. Residues S106 and Q127 each coordinate FMN. Substrate is bound at residue Y129. Residue T155 coordinates FMN. A substrate-binding site is contributed by R164. K251 contacts FMN. H275 serves as the catalytic Proton acceptor. R278 contributes to the substrate binding site. 306 to 330 lines the FMN pocket; the sequence is DSGIRNGLDVVRMIALGADTVLLGR.

The protein belongs to the FMN-dependent alpha-hydroxy acid dehydrogenase family. Requires FMN as cofactor.

Its subcellular location is the cell inner membrane. It catalyses the reaction (S)-lactate + A = pyruvate + AH2. Its function is as follows. Catalyzes the conversion of L-lactate to pyruvate. Is coupled to the respiratory chain. This chain is L-lactate dehydrogenase, found in Salmonella newport (strain SL254).